Reading from the N-terminus, the 518-residue chain is Putative malate dehydrogenase 1B (518 aa).

This sequence belongs to the LDH/MDH superfamily. MDH type 2 family.

In Homo sapiens (Human), this protein is Putative malate dehydrogenase 1B (MDH1B).